A 93-amino-acid polypeptide reads, in one-letter code: Acylphosphatase (93 aa).

The region spanning 6–93 is the Acylphosphatase-like domain; the sequence is RLVAWVRGQV…RGGYEGFAIR (88 aa). Catalysis depends on residues Arg-21 and Asn-40.

Belongs to the acylphosphatase family.

It catalyses the reaction an acyl phosphate + H2O = a carboxylate + phosphate + H(+). This chain is Acylphosphatase (acyP), found in Streptomyces coelicolor (strain ATCC BAA-471 / A3(2) / M145).